Here is a 78-residue protein sequence, read N- to C-terminus: DNA-directed RNA polymerase subunit Rpo5 (78 aa).

Belongs to the archaeal Rpo5/eukaryotic RPB5 RNA polymerase subunit family. Part of the RNA polymerase complex.

Its subcellular location is the cytoplasm. The catalysed reaction is RNA(n) + a ribonucleoside 5'-triphosphate = RNA(n+1) + diphosphate. Functionally, DNA-dependent RNA polymerase (RNAP) catalyzes the transcription of DNA into RNA using the four ribonucleoside triphosphates as substrates. This Methanococcoides burtonii (strain DSM 6242 / NBRC 107633 / OCM 468 / ACE-M) protein is DNA-directed RNA polymerase subunit Rpo5.